The sequence spans 96 residues: Mitochondrial import inner membrane translocase subunit Tim13-B (96 aa).

Positions 47–70 match the Twin CX3C motif motif; it reads CFRKCIGKPGGSLDNSEQKCVAMC. 2 disulfides stabilise this stretch: C47–C70 and C51–C66.

It belongs to the small Tim family. Heterohexamer; composed of 3 copies of TIMM8 (TIMM8A or TIMM8B) and 3 copies of TIMM13, named soluble 70 kDa complex. Associates with the TIM22 complex, whose core is composed of TIMM22.

Its subcellular location is the mitochondrion inner membrane. In terms of biological role, mitochondrial intermembrane chaperone that participates in the import and insertion of some multi-pass transmembrane proteins into the mitochondrial inner membrane. Also required for the transfer of beta-barrel precursors from the TOM complex to the sorting and assembly machinery (SAM complex) of the outer membrane. Acts as a chaperone-like protein that protects the hydrophobic precursors from aggregation and guide them through the mitochondrial intermembrane space. The TIMM8-TIMM13 complex mediates the import of some proteins while the predominant TIMM9-TIMM10 70 kDa complex mediates the import of much more proteins. This Xenopus laevis (African clawed frog) protein is Mitochondrial import inner membrane translocase subunit Tim13-B (timm13-b).